Here is a 107-residue protein sequence, read N- to C-terminus: Putative double-stranded DNA mimic protein PC1_1990 (107 aa).

This sequence belongs to the putative dsDNA mimic protein family.

Functionally, may act as a double-stranded DNA (dsDNA) mimic. Probably regulates the activity of a dsDNA-binding protein. The sequence is that of Putative double-stranded DNA mimic protein PC1_1990 from Pectobacterium carotovorum subsp. carotovorum (strain PC1).